Consider the following 177-residue polypeptide: dCTP deaminase, dUMP-forming (177 aa).

Residues 95–100 (RSSLGR), D112, 120–122 (TLE), Q141, Y155, and Q162 contribute to the dCTP site. The Proton donor/acceptor role is filled by E122.

Belongs to the dCTP deaminase family. In terms of assembly, homotrimer.

The enzyme catalyses dCTP + 2 H2O = dUMP + NH4(+) + diphosphate. It functions in the pathway pyrimidine metabolism; dUMP biosynthesis; dUMP from dCTP: step 1/1. Functionally, bifunctional enzyme that catalyzes both the deamination of dCTP to dUTP and the hydrolysis of dUTP to dUMP without releasing the toxic dUTP intermediate. In Hydrogenobaculum sp. (strain Y04AAS1), this protein is dCTP deaminase, dUMP-forming.